A 239-amino-acid polypeptide reads, in one-letter code: Large ribosomal subunit protein uL3 (239 aa).

Disordered regions lie at residues 140-166 (SHRS…PGHM) and 211-239 (PLPK…QEGA). An N5-methylglutamine modification is found at glutamine 151.

The protein belongs to the universal ribosomal protein uL3 family. In terms of assembly, part of the 50S ribosomal subunit. Forms a cluster with proteins L14 and L19. Post-translationally, methylated by PrmB.

Functionally, one of the primary rRNA binding proteins, it binds directly near the 3'-end of the 23S rRNA, where it nucleates assembly of the 50S subunit. In Bradyrhizobium sp. (strain BTAi1 / ATCC BAA-1182), this protein is Large ribosomal subunit protein uL3.